Reading from the N-terminus, the 248-residue chain is UPF0246 protein A1G_03985 (248 aa).

This sequence belongs to the UPF0246 family.

This is UPF0246 protein A1G_03985 from Rickettsia rickettsii (strain Sheila Smith).